A 967-amino-acid chain; its full sequence is Sarcosine oxidase subunit alpha (967 aa).

Ala141, Asp160, Glu161, Arg162, Ser168, Val207, Ala420, and Thr427 together coordinate NAD(+). (6R)-5,10-methylene-5,6,7,8-tetrahydrofolate-binding residues include Thr694 and Glu786.

Belongs to the GcvT family. As to quaternary structure, heterotetramer composed of subunits alpha (SoxA), beta (SoxB), gamma (SoxG) and delta (SoxD). Requires NAD(+) as cofactor.

The protein localises to the cytoplasm. It catalyses the reaction sarcosine + (6S)-5,6,7,8-tetrahydrofolate + O2 = (6R)-5,10-methylene-5,6,7,8-tetrahydrofolate + glycine + H2O2. The catalysed reaction is sarcosine + O2 + H2O = formaldehyde + glycine + H2O2. Functionally, in the presence of tetrahydrofolate, catalyzes the oxidative demethylation of sarcosine to yield glycine, 5,10-methylenetetrahydrofolate and hydrogen peroxide. In the absence of tetrahydrofolate, catalyzes the oxidative demethylation of sarcosine to yield glycine, formaldehyde and hydrogen peroxide. This is Sarcosine oxidase subunit alpha from Corynebacterium sp. (strain P-1).